Here is a 78-residue protein sequence, read N- to C-terminus: Putative membrane protein insertion efficiency factor (78 aa).

This sequence belongs to the UPF0161 family.

Its subcellular location is the cell membrane. Functionally, could be involved in insertion of integral membrane proteins into the membrane. This is Putative membrane protein insertion efficiency factor from Limosilactobacillus reuteri (strain DSM 20016) (Lactobacillus reuteri).